Reading from the N-terminus, the 256-residue chain is Alcohol dehydrogenase (256 aa).

12-35 (FVAGLGGIGLDTSKELVKRDLKNL) lines the NAD(+) pocket. Substrate is bound at residue serine 140. Residue tyrosine 153 is the Proton acceptor of the active site.

This sequence belongs to the short-chain dehydrogenases/reductases (SDR) family. As to quaternary structure, homodimer.

The catalysed reaction is a primary alcohol + NAD(+) = an aldehyde + NADH + H(+). The enzyme catalyses a secondary alcohol + NAD(+) = a ketone + NADH + H(+). The protein is Alcohol dehydrogenase (Adh) of Drosophila yakuba (Fruit fly).